A 54-amino-acid polypeptide reads, in one-letter code: Ovomucoid (54 aa).

The Kazal-like domain maps to 4–54 (VDCSDYPKPACTVEYMPLCGSDNKTYDNKCNFCNAVVDSNGTLTLSHFGKC). 3 cysteine pairs are disulfide-bonded: Cys-6/Cys-36, Cys-14/Cys-33, and Cys-22/Cys-54. N-linked (GlcNAc...) asparagine glycosylation is present at Asn-43.

The protein resides in the secreted. This chain is Ovomucoid, found in Anser anser anser (Western greylag goose).